Reading from the N-terminus, the 83-residue chain is Alpha-conotoxin QcIA (83 aa).

The N-terminal stretch at 1–21 (MGMRMMFTLFLLAVLSTTVVS) is a signal peptide. The propeptide occupies 22-48 (FTLDRASNGRDAAADSKAADQIAQTVR). 2 cysteine pairs are disulfide-bonded: C51–C57 and C52–C65. The tract at residues 53-55 (SNP) is ser-Xaa-Pro motif, crucial for potent interaction with nAChR. Positions 66–83 (RRTLMLQNPLNHDMSPSA) are excised as a propeptide.

The protein belongs to the conotoxin A superfamily. As to expression, expressed by the venom duct.

The protein resides in the secreted. Functionally, alpha-conotoxins bind to the nicotinic acetylcholine receptors (nAChR) and inhibit them. A synthetic amidated version of this toxin potently and preferentially antagonizes neuronal rat alpha-3-beta-2 (IC(50)=55.7 nM) and alpha-6/alpha-3-beta-4 (IC(50)=90.69 nM) nAChRs. The protein is Alpha-conotoxin QcIA of Conus quercinus (Oak cone).